The following is a 460-amino-acid chain: Argininosuccinate lyase (460 aa).

This sequence belongs to the lyase 1 family. Argininosuccinate lyase subfamily.

The protein localises to the cytoplasm. It catalyses the reaction 2-(N(omega)-L-arginino)succinate = fumarate + L-arginine. Its pathway is amino-acid biosynthesis; L-arginine biosynthesis; L-arginine from L-ornithine and carbamoyl phosphate: step 3/3. The sequence is that of Argininosuccinate lyase from Nitratidesulfovibrio vulgaris (strain ATCC 29579 / DSM 644 / CCUG 34227 / NCIMB 8303 / VKM B-1760 / Hildenborough) (Desulfovibrio vulgaris).